The primary structure comprises 213 residues: Uridine kinase (213 aa).

Position 15-22 (15-22 (GASASGKS)) interacts with ATP.

This sequence belongs to the uridine kinase family.

Its subcellular location is the cytoplasm. It catalyses the reaction uridine + ATP = UMP + ADP + H(+). The catalysed reaction is cytidine + ATP = CMP + ADP + H(+). It participates in pyrimidine metabolism; CTP biosynthesis via salvage pathway; CTP from cytidine: step 1/3. The protein operates within pyrimidine metabolism; UMP biosynthesis via salvage pathway; UMP from uridine: step 1/1. The chain is Uridine kinase from Pectobacterium carotovorum subsp. carotovorum (strain PC1).